We begin with the raw amino-acid sequence, 344 residues long: Phenylalanine--tRNA ligase alpha subunit (344 aa).

A Mg(2+)-binding site is contributed by E256.

The protein belongs to the class-II aminoacyl-tRNA synthetase family. Phe-tRNA synthetase alpha subunit type 1 subfamily. In terms of assembly, tetramer of two alpha and two beta subunits. Requires Mg(2+) as cofactor.

The protein localises to the cytoplasm. The enzyme catalyses tRNA(Phe) + L-phenylalanine + ATP = L-phenylalanyl-tRNA(Phe) + AMP + diphosphate + H(+). The chain is Phenylalanine--tRNA ligase alpha subunit from Bacillus pumilus (strain SAFR-032).